The primary structure comprises 358 residues: Peptide chain release factor 1 (358 aa).

Gln233 carries the post-translational modification N5-methylglutamine.

Belongs to the prokaryotic/mitochondrial release factor family. Post-translationally, methylated by PrmC. Methylation increases the termination efficiency of RF1.

It localises to the cytoplasm. Peptide chain release factor 1 directs the termination of translation in response to the peptide chain termination codons UAG and UAA. This Clostridium botulinum (strain Okra / Type B1) protein is Peptide chain release factor 1.